Consider the following 182-residue polypeptide: Isopentenyl-diphosphate Delta-isomerase (182 aa).

Mn(2+)-binding residues include His-25 and His-32. In terms of domain architecture, Nudix hydrolase spans Leu-30–Met-164. The active site involves Cys-67. Cys-67 contributes to the Mg(2+) binding site. His-69 serves as a coordination point for Mn(2+). Glu-87 is a binding site for Mg(2+). The Mn(2+) site is built by Glu-114 and Glu-116. Residue Glu-116 is part of the active site.

Belongs to the IPP isomerase type 1 family. As to quaternary structure, homodimer. It depends on Mg(2+) as a cofactor. Mn(2+) is required as a cofactor.

Its subcellular location is the cytoplasm. The enzyme catalyses isopentenyl diphosphate = dimethylallyl diphosphate. It functions in the pathway isoprenoid biosynthesis; dimethylallyl diphosphate biosynthesis; dimethylallyl diphosphate from isopentenyl diphosphate: step 1/1. Catalyzes the 1,3-allylic rearrangement of the homoallylic substrate isopentenyl (IPP) to its highly electrophilic allylic isomer, dimethylallyl diphosphate (DMAPP). In Shigella boydii serotype 4 (strain Sb227), this protein is Isopentenyl-diphosphate Delta-isomerase.